The sequence spans 161 residues: MSEQDGSPIRKYFLFPGATHVDAEECEITTVLGSCVAVCLWDQRHGGGGMNHFMLPLWNGEGLATPKYGSIAMERLLEQVLAIGARKEHLVAKVFGGANLLSTSSAACPIGERNIELAMTQLEEWRIAVVATDLGGRVGRKIIMNTMTGVVLLGRGKQQNQ.

Belongs to the CheD family.

The catalysed reaction is L-glutaminyl-[protein] + H2O = L-glutamyl-[protein] + NH4(+). Probably deamidates glutamine residues to glutamate on methyl-accepting chemotaxis receptors (MCPs), playing an important role in chemotaxis. The protein is Probable chemoreceptor glutamine deamidase CheD of Trichlorobacter lovleyi (strain ATCC BAA-1151 / DSM 17278 / SZ) (Geobacter lovleyi).